Consider the following 461-residue polypeptide: Photosystem II CP43 reaction center protein (461 aa).

A propeptide spanning residues 1–2 (ME) is cleaved from the precursor. Thr-3 carries the post-translational modification N-acetylthreonine. Position 3 is a phosphothreonine (Thr-3). Helical transmembrane passes span 57–81 (LFEVAHFVPEKPMYEQGLILLPHLA), 122–143 (LLGPETLEESFPFFGYVWKDRN), 166–188 (KALYFGGVYDTWAPGGGDVRKIT), 243–263 (KPFAWARRAFVWSGEAYLSYS), and 279–300 (WFNNTAYPSEFYGPTGPEASQA). Residue Glu-355 coordinates [CaMn4O5] cluster. A helical transmembrane segment spans residues 435 to 459 (RARAAAAGFEKGIDRDLEPVLSMTP).

It belongs to the PsbB/PsbC family. PsbC subfamily. PSII is composed of 1 copy each of membrane proteins PsbA, PsbB, PsbC, PsbD, PsbE, PsbF, PsbH, PsbI, PsbJ, PsbK, PsbL, PsbM, PsbT, PsbX, PsbY, PsbZ, Psb30/Ycf12, at least 3 peripheral proteins of the oxygen-evolving complex and a large number of cofactors. It forms dimeric complexes. Binds multiple chlorophylls and provides some of the ligands for the Ca-4Mn-5O cluster of the oxygen-evolving complex. It may also provide a ligand for a Cl- that is required for oxygen evolution. PSII binds additional chlorophylls, carotenoids and specific lipids. is required as a cofactor.

The protein localises to the plastid. The protein resides in the chloroplast thylakoid membrane. One of the components of the core complex of photosystem II (PSII). It binds chlorophyll and helps catalyze the primary light-induced photochemical processes of PSII. PSII is a light-driven water:plastoquinone oxidoreductase, using light energy to abstract electrons from H(2)O, generating O(2) and a proton gradient subsequently used for ATP formation. The polypeptide is Photosystem II CP43 reaction center protein (Ceratophyllum demersum (Rigid hornwort)).